A 158-amino-acid chain; its full sequence is Protein Smg homolog (158 aa).

This sequence belongs to the Smg family.

This Vibrio atlanticus (strain LGP32) (Vibrio splendidus (strain Mel32)) protein is Protein Smg homolog.